A 106-amino-acid polypeptide reads, in one-letter code: UPF0145 protein BDI_2732 (106 aa).

The protein belongs to the UPF0145 family.

The chain is UPF0145 protein BDI_2732 from Parabacteroides distasonis (strain ATCC 8503 / DSM 20701 / CIP 104284 / JCM 5825 / NCTC 11152).